The chain runs to 1115 residues: G-protein coupled receptor GRL101 (1115 aa).

An N-terminal signal peptide occupies residues 1-24 (MATMSGTTIVCLIYLTTMLGNSQG). Residues 25-767 (VNLKIESPSP…SCEDLMSNHV (743 aa)) are Extracellular-facing. LDL-receptor class A domains lie at 36-79 (TLCS…TCGC), 77-115 (CGCL…ECDI), 116-155 (YICP…ICER), 156-196 (RECV…ACDS), 195-232 (DSDK…NCKL), 231-269 (KLCD…VCAN), 272-318 (YGCP…YCSN), 320-363 (SECK…SCLA), 365-403 (PKCS…NCEN), 404-442 (HQCA…DCDP), 444-485 (PVCE…NCSQ), and 486-525 (HICL…NCRY). 16 disulfides stabilise this stretch: Cys38–Cys53, Cys46–Cys66, Cys60–Cys77, Cys79–Cys91, Cys86–Cys104, Cys98–Cys113, Cys118–Cys131, Cys138–Cys153, Cys158–Cys170, Cys165–Cys183, Cys177–Cys194, Cys202–Cys220, Cys214–Cys230, Cys233–Cys245, Cys240–Cys258, and Cys252–Cys267. N-linked (GlcNAc...) asparagine glycosylation is present at Asn87. N-linked (GlcNAc...) asparagine glycosylation occurs at Asn166. Asn269 carries N-linked (GlcNAc...) asparagine glycosylation. 3 disulfide bridges follow: Cys274/Cys291, Cys282/Cys304, and Cys298/Cys316. An N-linked (GlcNAc...) asparagine glycan is attached at Asn318. 15 disulfide bridges follow: Cys322/Cys339, Cys334/Cys352, Cys346/Cys361, Cys367/Cys379, Cys374/Cys392, Cys386/Cys401, Cys406/Cys418, Cys413/Cys431, Cys425/Cys440, Cys446/Cys458, Cys453/Cys474, Cys465/Cys483, Cys488/Cys500, Cys495/Cys513, and Cys507/Cys523. Asn482 carries N-linked (GlcNAc...) asparagine glycosylation. A glycan (N-linked (GlcNAc...) asparagine) is linked at Asn502. One can recognise an LRRNT domain in the interval 518-562 (WDENNCRYWCPHGQAICQCEGVTMDCTGQKLKEMPVQQMEEDLSK). Asn571 carries an N-linked (GlcNAc...) asparagine glycan. LRR repeat units lie at residues 584-605 (KVTY…SFQN), 608-629 (KLTH…SLLG), 632-653 (NLKQ…TFSS), 656-677 (HLTV…MFKG), 680-701 (QITV…AFNN), and 704-725 (NVRL…VFMG). 2 N-linked (GlcNAc...) asparagine glycosylation sites follow: Asn618 and Asn624. N-linked (GlcNAc...) asparagine glycosylation occurs at Asn685. The helical transmembrane segment at 768 to 788 (LRVSIWVLGVIALVGNFVVIF) threads the bilayer. At 789–801 (WRVRDFRGGKVHS) the chain is on the cytoplasmic side. Residues 802–822 (FLITNLAIGDFLMGVYLLIIA) traverse the membrane as a helical segment. Residues 823 to 857 (TADTYYRGVYISHDENWKQSGLCQFAGFVSTFSSE) are Extracellular-facing. The helical transmembrane segment at 858–878 (LSVLTLSTITLDRLICILFPL) threads the bilayer. At 879-887 (RRTRLGLRQ) the chain is on the cytoplasmic side. Residues 888–908 (AIIVMSCIWVLVFLLAVLPLL) form a helical membrane-spanning segment. At 909 to 941 (GFSYFENFYGRSGVCLALHVTPDRRPGWEYSVG) the chain is on the extracellular side. Residues 942-962 (VFILLNLLSFVLIASSYLWMF) form a helical membrane-spanning segment. Topologically, residues 963 to 988 (SVAKKTRSAVRTAESKNDNAMARRMT) are cytoplasmic. The helical transmembrane segment at 989–1009 (LIVMTDFCCWVPIIVLGFVSL) threads the bilayer. Residues 1010–1017 (AGARADDQ) lie on the Extracellular side of the membrane. Residues 1018 to 1038 (VYAWIAVFVLPLNSATNPVIY) form a helical membrane-spanning segment. Residues 1039–1115 (TLSTAPFLGN…YYNTELHSDS (77 aa)) are Cytoplasmic-facing.

Belongs to the G-protein coupled receptor 1 family. As to expression, predominantly expressed in a small number of neurons within the central nervous system and to a lesser extent in the heart.

The protein localises to the cell membrane. Functionally, might directly transduce signals carried by large extracellular lipoprotein complexes into neuronal events. In Lymnaea stagnalis (Great pond snail), this protein is G-protein coupled receptor GRL101.